The sequence spans 712 residues: Ferric reductase transmembrane component 6 (712 aa).

Residues 1–17 form the signal peptide; the sequence is MHRTLLFLTWLISLTKA. The Vacuolar segment spans residues 18–167; the sequence is FNIKLPHTEK…HAHAYNLDIS (150 aa). 3 N-linked (GlcNAc...) asparagine glycosylation sites follow: asparagine 89, asparagine 112, and asparagine 124. Residues 168–188 form a helical membrane-spanning segment; sequence SVYGAYLTYYFVIVGIIAVFF. Residues 189-244 are Cytoplasmic-facing; sequence HMSHYNGLNRALFASRFVNYIRGHFVLPTFLVDKHANHFKFLNVEVFTGLMPNSLE. Residues 245 to 265 traverse the membrane as a helical segment; it reads AWIIFGYTLANIIFLSISYII. Residues 266 to 287 are Vacuolar-facing; it reads DPYNLIFNSHLSQFTRLLADRS. One can recognise a Ferric oxidoreductase domain in the interval 287-411; the sequence is SGILAFTQFP…YCCWQHVKIF (125 aa). The chain crosses the membrane as a helical span at residues 288 to 308; the sequence is GILAFTQFPLIIIFTARNSFL. The Cytoplasmic portion of the chain corresponds to 309 to 328; the sequence is EFLTGVKFNSFISFHKWIGR. Heme contacts are provided by histidine 323 and histidine 337. Residues 329–349 form a helical membrane-spanning segment; sequence IMVLNATIHSLSYSLFAIINH. Topologically, residues 350 to 360 are vacuolar; the sequence is AFKISNKQLYW. A helical transmembrane segment spans residues 361–381; the sequence is KFGIASITVLCVLLVLSLGIV. The Cytoplasmic portion of the chain corresponds to 382–387; the sequence is RKRHYE. A helical transmembrane segment spans residues 388-408; the sequence is FFLYTHIILALLFFYCCWQHV. Heme contacts are provided by histidine 393 and histidine 407. Topologically, residues 409–416 are vacuolar; that stretch reads KIFNGWKE. The FAD-binding FR-type domain occupies 412–546; the sequence is NGWKEWIVVS…EGPYGPSNLH (135 aa). Residues 417-437 form a helical membrane-spanning segment; that stretch reads WIVVSLLIWGLEKLFRIWNIL. The Cytoplasmic portion of the chain corresponds to 438 to 712; it reads QFRFPKATLI…IEYFEEYQCW (275 aa). 493–499 contributes to the FAD binding site; it reads HPFTIID. Residues 538 to 541 and 678 to 679 each bind NADP(+); these read GPYG and CG.

Belongs to the ferric reductase (FRE) family. FAD serves as cofactor.

The protein resides in the vacuole membrane. The enzyme catalyses 2 a Fe(II)-siderophore + NADP(+) + H(+) = 2 a Fe(III)-siderophore + NADPH. Its function is as follows. Metalloreductase responsible for reducing vacuolar iron and copper prior to transport into the cytosol. Catalyzes the reduction of Fe(3+) to Fe(2+) and Cu(2+) to Cu(+), respectively, which can then be transported by the respective vacuolar efflux systems to the cytosol. In Saccharomyces cerevisiae (strain ATCC 204508 / S288c) (Baker's yeast), this protein is Ferric reductase transmembrane component 6 (FRE6).